The sequence spans 247 residues: Carboxy-S-adenosyl-L-methionine synthase (247 aa).

Residues Y39, 64-66, 89-90, 117-118, N132, and R199 each bind S-adenosyl-L-methionine; these read GCS, DN, and DI.

The protein belongs to the class I-like SAM-binding methyltransferase superfamily. Cx-SAM synthase family. In terms of assembly, homodimer.

The enzyme catalyses prephenate + S-adenosyl-L-methionine = carboxy-S-adenosyl-L-methionine + 3-phenylpyruvate + H2O. In terms of biological role, catalyzes the conversion of S-adenosyl-L-methionine (SAM) to carboxy-S-adenosyl-L-methionine (Cx-SAM). In Salmonella choleraesuis (strain SC-B67), this protein is Carboxy-S-adenosyl-L-methionine synthase.